The following is a 188-amino-acid chain: HTH-type transcriptional regulator QacR (188 aa).

An HTH tetR-type domain is found at 1–61 (MNLKDKILGV…EILNIEESKW (61 aa)). A DNA-binding region (H-T-H motif) is located at residues 24 to 43 (TTGEIVKLSESSKGNLYYHF).

Homodimer. Binds cooperatively to DNA as a pair of dimers.

Functionally, transcriptional repressor of qacA. Binds to IR1, an unusually long 28 bp operator, which is located downstream from the qacA promoter and overlaps its transcription start site. QacR is induced from its IR1 site by binding to one of many structurally dissimilar cationic lipophilic compounds, which are also substrates of QacA. The protein is HTH-type transcriptional regulator QacR (qacR) of Staphylococcus aureus (strain Mu50 / ATCC 700699).